A 380-amino-acid chain; its full sequence is GTP-binding protein 10 (380 aa).

Residues 13-148 (GNFVDNVRLY…RNIRLDLKLI (136 aa)) enclose the Obg domain. The 196-residue stretch at 149-344 (ADFGLVGFPN…LKSLIRQSLE (196 aa)) folds into the OBG-type G domain. GTP is bound by residues 155–162 (GFPNAGKS), 202–206 (DLPGL), and 278–281 (NKMD).

This sequence belongs to the TRAFAC class OBG-HflX-like GTPase superfamily. OBG GTPase family.

Its subcellular location is the nucleus. It is found in the nucleolus. In terms of biological role, may be involved in the ribosome maturation process. The chain is GTP-binding protein 10 (gtpbp10) from Danio rerio (Zebrafish).